Consider the following 463-residue polypeptide: Retinoic acid receptor RXR-gamma (463 aa).

The interval 1 to 138 (MYGNYSHFMK…TSPGSLVKHI (138 aa)) is modulating. The disordered stretch occupies residues 16-53 (GGSPGHTGSTSMSPSVALPTGKPMDSHPSYTDTPVSAP). 2 consecutive NR C4-type zinc fingers follow at residues 139 to 159 (CAIC…CEGC) and 175 to 199 (CRDN…YQKC). The nuclear receptor DNA-binding region spans 139–204 (CAICGDRSSG…RYQKCLVMGM (66 aa)). Residues 205–230 (KREAVQEERQRSRERAESEAECASTG) form a hinge region. An NR LBD domain is found at 231 to 459 (HEDMPVERIL…TFLMEMLETP (229 aa)).

This sequence belongs to the nuclear hormone receptor family. NR2 subfamily. In terms of assembly, homodimer. Heterodimer with a RAR molecule. Binds DNA preferentially as a RAR/RXR heterodimer. Interacts with RARA. Acetylated by EP300. In terms of tissue distribution, expressed in the liver, but not detected in the adrenal gland (at protein level). Restricted expression in adrenal gland, kidney, liver, brain and lungs. Strong expression in heart and muscles.

Its subcellular location is the nucleus. The protein localises to the cytoplasm. Its function is as follows. Receptor for retinoic acid. Retinoic acid receptors bind as heterodimers to their target response elements in response to their ligands, all-trans or 9-cis retinoic acid, and regulate gene expression in various biological processes. The RAR/RXR heterodimers bind to the retinoic acid response elements (RARE) composed of tandem 5'-AGGTCA-3' sites known as DR1-DR5. The high affinity ligand for RXRs is 9-cis retinoic acid. The protein is Retinoic acid receptor RXR-gamma (Rxrg) of Rattus norvegicus (Rat).